A 305-amino-acid chain; its full sequence is Serine/threonine-protein phosphatase 6 catalytic subunit (305 aa).

Met-1 carries the N-acetylmethionine modification. Mn(2+) contacts are provided by Asp-53, His-55, Asp-81, and Asn-113. His-114 functions as the Proton donor in the catalytic mechanism. His-163 and His-237 together coordinate Mn(2+).

Belongs to the PPP phosphatase family. PP-6 (PP-V) subfamily. As to quaternary structure, protein phosphatase 6 (PP6) holoenzyme is proposed to be a heterotrimeric complex formed by the catalytic subunit, a SAPS domain-containing subunit (PP6R) and an ankyrin repeat-domain containing regulatory subunit (ARS). Interacts with subunits PPP6R1, PPP6R2 and PPP6R3. Interacts with subunit ANKRD28. Interacts with IGBP1. Interacts with MAP3K7. Interacts with NFKBIE. Interacts with TRIM14 and WRNIP1; these interactions positively regulate the RIG-I signaling pathway. Mn(2+) serves as cofactor. As to expression, ubiquitously expressed in all tissues tested with strongest expression in lung, spleen, liver, kidney and brain. Weaker expression observed in bladder, pancreas, heart and skeletal muscle.

The protein localises to the mitochondrion. The protein resides in the cytoplasm. The catalysed reaction is O-phospho-L-seryl-[protein] + H2O = L-seryl-[protein] + phosphate. It carries out the reaction O-phospho-L-threonyl-[protein] + H2O = L-threonyl-[protein] + phosphate. Its function is as follows. Catalytic subunit of protein phosphatase 6 (PP6). PP6 is a component of a signaling pathway regulating cell cycle progression in response to IL2 receptor stimulation. N-terminal domain restricts G1 to S phase progression in cancer cells, in part through control of cyclin D13 During mitosis, regulates spindle positioning. Down-regulates MAP3K7 kinase activation of the IL1 signaling pathway by dephosphorylation of MAP3K7. Acts as a regulator of innate immunity by mediating dephosphorylation CGAS, STING1 and RIGI. Also participates in the innate immune defense against viruses by desphosphorylating RIGI, an essential step that triggers RIGI-mediated signaling activation. Also regulates innate immunity by acting as a negative regulator of the cGAS-STING pathway: mediates dephosphorylation and inactivation of CGAS and STING1. CGAS dephosphorylation at 'Ser-420' impairs its ability to bind GTP, thereby inactivating it. The sequence is that of Serine/threonine-protein phosphatase 6 catalytic subunit from Mus musculus (Mouse).